The primary structure comprises 436 residues: S-locus-specific glycoprotein S6 (436 aa).

Residues 1 to 31 (MKGVRKPYDNSYTLSFLLVFFVLILFCPAFS) form the signal peptide. The 123-residue stretch at 34–156 (TLSSTESLRI…SNNDASEYLW (123 aa)) folds into the Bulb-type lectin domain. N-linked (GlcNAc...) asparagine glycosylation is found at N46, N64, N114, N121, N245, N261, and N390. The 81-residue stretch at 351–431 (CSGDGFTRMK…HGQDLYVRLA (81 aa)) folds into the PAN domain. 2 disulfide bridges follow: C381–C406 and C389–C391.

As to expression, stigma.

Its function is as follows. Involved in sporophytic self-incompatibility system (the inability of flowering plants to achieve self-fertilization). This chain is S-locus-specific glycoprotein S6 (SLSG), found in Brassica oleracea (Wild cabbage).